A 359-amino-acid chain; its full sequence is 3-isopropylmalate dehydrogenase (359 aa).

NAD(+) is bound at residue 76 to 89; that stretch reads GPKWDTIERSIRPE. Positions 96, 106, 134, and 225 each coordinate substrate. Residues aspartate 225, aspartate 249, and aspartate 253 each contribute to the Mg(2+) site. 283 to 295 is a binding site for NAD(+); it reads GSAPDIAGQNVAN.

This sequence belongs to the isocitrate and isopropylmalate dehydrogenases family. LeuB type 1 subfamily. Homodimer. Mg(2+) serves as cofactor. The cofactor is Mn(2+).

It is found in the cytoplasm. It catalyses the reaction (2R,3S)-3-isopropylmalate + NAD(+) = 4-methyl-2-oxopentanoate + CO2 + NADH. It functions in the pathway amino-acid biosynthesis; L-leucine biosynthesis; L-leucine from 3-methyl-2-oxobutanoate: step 3/4. Its function is as follows. Catalyzes the oxidation of 3-carboxy-2-hydroxy-4-methylpentanoate (3-isopropylmalate) to 3-carboxy-4-methyl-2-oxopentanoate. The product decarboxylates to 4-methyl-2 oxopentanoate. This chain is 3-isopropylmalate dehydrogenase, found in Acinetobacter baylyi (strain ATCC 33305 / BD413 / ADP1).